Consider the following 747-residue polypeptide: Cysteine--tRNA ligase, cytoplasmic (747 aa).

The disordered stretch occupies residues 1-26 (MTESWEQGKGRRTQPPWSAPNTNEQP). The span at 15–25 (PPWSAPNTNEQ) shows a compositional bias: polar residues. Cys-54 contacts Zn(2+). Gly-55 lines the L-cysteine pocket. The 'HIGH' region motif lies at 56–66 (PTVYDASHMGH). An L-cysteine-binding site is contributed by Thr-95. The 'KIIK' region signature appears at 100 to 103 (KIIK). Zn(2+) contacts are provided by Cys-347, His-372, and Glu-376. An L-cysteine-binding site is contributed by His-372. The 'KMSKS' region motif lies at 405–409 (KMSKS). Lys-408 is a binding site for ATP. Residues 651-683 (EEKRKAEEEKQRKKEEAARKKQQQEAAKLEKMK) show a composition bias toward basic and acidic residues. Disordered stretches follow at residues 651-685 (EEKRKAEEEKQRKKEEAARKKQQQEAAKLEKMKIS) and 700-721 (FDESGFPTHDTEGKELSKGQTK).

The protein belongs to the class-I aminoacyl-tRNA synthetase family. As to quaternary structure, homodimer. Zn(2+) serves as cofactor.

Its subcellular location is the cytoplasm. It catalyses the reaction tRNA(Cys) + L-cysteine + ATP = L-cysteinyl-tRNA(Cys) + AMP + diphosphate. In terms of biological role, catalyzes the ATP-dependent ligation of cysteine to tRNA(Cys). This chain is Cysteine--tRNA ligase, cytoplasmic (cars1), found in Xenopus laevis (African clawed frog).